Reading from the N-terminus, the 40-residue chain is MDWRLIVVLAPILLAGGWAVFNIGKAALEQINRALKGDQA.

A helical membrane pass occupies residues 5–23 (LIVVLAPILLAGGWAVFNI).

Belongs to the PsbY family. In terms of assembly, PSII is composed of 1 copy each of membrane proteins PsbA, PsbB, PsbC, PsbD, PsbE, PsbF, PsbH, PsbI, PsbJ, PsbK, PsbL, PsbM, PsbT, PsbX, PsbY, PsbZ, Psb30/Ycf12, peripheral proteins PsbO, CyanoQ (PsbQ), PsbU, PsbV and a large number of cofactors. It forms dimeric complexes.

It is found in the cellular thylakoid membrane. In terms of biological role, loosely associated component of the core of photosystem II (PSII), it is not always seen in crystals. PSII is a light-driven water plastoquinone oxidoreductase, using light energy to abstract electrons from H(2)O, generating a proton gradient subsequently used for ATP formation. The protein is Photosystem II reaction center protein Y of Synechococcus elongatus (strain ATCC 33912 / PCC 7942 / FACHB-805) (Anacystis nidulans R2).